Here is a 203-residue protein sequence, read N- to C-terminus: Thymidylate kinase (203 aa).

Residue 14–21 (GGEGIGKS) participates in ATP binding.

This sequence belongs to the thymidylate kinase family.

It catalyses the reaction dTMP + ATP = dTDP + ADP. Its function is as follows. Phosphorylation of dTMP to form dTDP in both de novo and salvage pathways of dTTP synthesis. This Rickettsia peacockii (strain Rustic) protein is Thymidylate kinase.